We begin with the raw amino-acid sequence, 184 residues long: dCTP deaminase (184 aa).

Lysine 107 to arginine 112 is a binding site for dCTP. Glutamate 133 acts as the Proton donor/acceptor in catalysis. Residues glutamine 152, tyrosine 166, and glutamine 176 each coordinate dCTP.

The protein belongs to the dCTP deaminase family. Homotrimer.

It catalyses the reaction dCTP + H2O + H(+) = dUTP + NH4(+). The protein operates within pyrimidine metabolism; dUMP biosynthesis; dUMP from dCTP (dUTP route): step 1/2. In terms of biological role, catalyzes the deamination of dCTP to dUTP. The chain is dCTP deaminase from Roseiflexus castenholzii (strain DSM 13941 / HLO8).